A 360-amino-acid chain; its full sequence is MERLKVELGERSYPIEIAAGLLQHAEVLTQTIKGKRVMIVTNTVVAPLYLERIVQLLSGYQVEHLILPDGEAYKTLATFERIMSALLETNHGRDTTLIALGGGVIGDVVGFAAASYQRGIPFIQVPTTLLSQVDSSVGGKTAVNHPLGKNMIGAFYQPRHVVIDTECLQTLPAREFAAGMAEVIKYGIIWDVEFFCWLEANMSRLQAQEPAALAYAIRRCCEIKADVVGQDETEHGVRALLNLGHTFGHAIEAEKGYGNWLHGEAVAAGTMLAANTALARGDVTEQQVDRIRALLLAANLPVTAPPEMDFAAFIRHMRRDKKVLEGKLRLVLPVGIGHAQVVADVSDAELLAVIESGRDE.

Residues 69-74, 103-107, 127-128, K140, K149, and 167-170 contribute to the NAD(+) site; these read DGEAYK, GVIGD, TT, and CLQT. Residues E182, H245, and H262 each coordinate Zn(2+).

This sequence belongs to the sugar phosphate cyclases superfamily. Dehydroquinate synthase family. Requires Co(2+) as cofactor. Zn(2+) is required as a cofactor. NAD(+) serves as cofactor.

The protein localises to the cytoplasm. The enzyme catalyses 7-phospho-2-dehydro-3-deoxy-D-arabino-heptonate = 3-dehydroquinate + phosphate. Its pathway is metabolic intermediate biosynthesis; chorismate biosynthesis; chorismate from D-erythrose 4-phosphate and phosphoenolpyruvate: step 2/7. In terms of biological role, catalyzes the conversion of 3-deoxy-D-arabino-heptulosonate 7-phosphate (DAHP) to dehydroquinate (DHQ). The chain is 3-dehydroquinate synthase from Aeromonas hydrophila subsp. hydrophila (strain ATCC 7966 / DSM 30187 / BCRC 13018 / CCUG 14551 / JCM 1027 / KCTC 2358 / NCIMB 9240 / NCTC 8049).